Reading from the N-terminus, the 492-residue chain is Probable malate:quinone oxidoreductase (492 aa).

Belongs to the MQO family. Requires FAD as cofactor.

It carries out the reaction (S)-malate + a quinone = a quinol + oxaloacetate. Its pathway is carbohydrate metabolism; tricarboxylic acid cycle; oxaloacetate from (S)-malate (quinone route): step 1/1. The chain is Probable malate:quinone oxidoreductase from Methylobacillus flagellatus (strain ATCC 51484 / DSM 6875 / VKM B-1610 / KT).